The following is a 24-amino-acid chain: Coenzyme PQQ synthesis protein A (24 aa).

Residues Glu-16–Tyr-20 constitute a cross-link (pyrroloquinoline quinone (Glu-Tyr)).

The protein belongs to the PqqA family.

Its pathway is cofactor biosynthesis; pyrroloquinoline quinone biosynthesis. In terms of biological role, required for coenzyme pyrroloquinoline quinone (PQQ) biosynthesis. PQQ is probably formed by cross-linking a specific glutamate to a specific tyrosine residue and excising these residues from the peptide. In Burkholderia cenocepacia (strain ATCC BAA-245 / DSM 16553 / LMG 16656 / NCTC 13227 / J2315 / CF5610) (Burkholderia cepacia (strain J2315)), this protein is Coenzyme PQQ synthesis protein A.